The primary structure comprises 182 residues: UPF0397 protein BcerKBAB4_2500 (182 aa).

5 consecutive transmembrane segments (helical) span residues 9–29 (VVAIGIGAALYGVLGLWGFSI), 40–60 (AILTVFGALFGPVAGLLIGLI), 71–91 (WGIWWGWVISSGIIGLAMGLI), 114–134 (IAGLIGIVIAIIFAGSFDIIV), and 142–162 (IVIQVLGATIADVIVFLVLGL).

This sequence belongs to the UPF0397 family.

The protein localises to the cell membrane. This chain is UPF0397 protein BcerKBAB4_2500, found in Bacillus mycoides (strain KBAB4) (Bacillus weihenstephanensis).